The following is a 292-amino-acid chain: Cytidine deaminase (292 aa).

CMP/dCMP-type deaminase domains are found at residues 47-167 and 186-292; these read TPLK…FGPK and DHQD…YYSL. 88-90 contacts substrate; that stretch reads NQE. His-101 is a Zn(2+) binding site. The Proton donor role is filled by Glu-103. The Zn(2+) site is built by Cys-128 and Cys-131.

It belongs to the cytidine and deoxycytidylate deaminase family. As to quaternary structure, homodimer. It depends on Zn(2+) as a cofactor.

It catalyses the reaction cytidine + H2O + H(+) = uridine + NH4(+). The enzyme catalyses 2'-deoxycytidine + H2O + H(+) = 2'-deoxyuridine + NH4(+). This enzyme scavenges exogenous and endogenous cytidine and 2'-deoxycytidine for UMP synthesis. In Haemophilus influenzae (strain 86-028NP), this protein is Cytidine deaminase.